A 908-amino-acid chain; its full sequence is Protein translocase subunit SecA (908 aa).

Residues Gln-87, 105–109, and Asp-512 contribute to the ATP site; that span reads GEGKT. The segment at 882-908 is disordered; the sequence is DGEKVGRNDPCPCGSGKKYKQCHGKLT. 4 residues coordinate Zn(2+): Cys-892, Cys-894, Cys-903, and His-904. A compositionally biased stretch (basic residues) spans 898–908; that stretch reads KKYKQCHGKLT.

The protein belongs to the SecA family. In terms of assembly, monomer and homodimer. Part of the essential Sec protein translocation apparatus which comprises SecA, SecYEG and auxiliary proteins SecDF-YajC and YidC. Zn(2+) serves as cofactor.

It localises to the cell inner membrane. It is found in the cytoplasm. The enzyme catalyses ATP + H2O + cellular proteinSide 1 = ADP + phosphate + cellular proteinSide 2.. Its function is as follows. Part of the Sec protein translocase complex. Interacts with the SecYEG preprotein conducting channel. Has a central role in coupling the hydrolysis of ATP to the transfer of proteins into and across the cell membrane, serving both as a receptor for the preprotein-SecB complex and as an ATP-driven molecular motor driving the stepwise translocation of polypeptide chains across the membrane. The protein is Protein translocase subunit SecA of Shewanella amazonensis (strain ATCC BAA-1098 / SB2B).